The primary structure comprises 202 residues: Ribosome biogenesis regulatory protein homolog (202 aa).

The interval 82–103 is disordered; it reads TLPPPTTPLPREKPVPQPKPET.

The protein belongs to the RRS1 family. Component of a hexameric 5S RNP precursor complex, composed of 5S RNA, RRS1, RPF2, RPL5, RPL11 and SYO1; this complex acts as a precursor for ribosome assembly.

The protein resides in the nucleus. Involved in ribosomal large subunit assembly. The protein is Ribosome biogenesis regulatory protein homolog of Chaetomium thermophilum (strain DSM 1495 / CBS 144.50 / IMI 039719) (Thermochaetoides thermophila).